The primary structure comprises 790 residues: MRTYRYFLLLFWVGQPYPTFSNPLSKRTSGFPAKRKALELSANSRNELSRSKRSWMWNQFFLLEEYTGSDYQYVGKLHSDQDRGDGSLKYILSGDGAGDLFIINENTGDIQATKRLDREEKPVYILRAQAVNRRTGRPVEPESEFIIKIHDINDNEPIFTKDVYTATVPEMADVGTFVVQVTATDADDPTYGNSAKVVYSILQGQPYFSVESETGIIKTALLNMDRENREQYQVVIQAKDMGGQMGGLSGTTTVNITLTDVNDNPPRFPQSTYQFKTPESSPPGTPIGRIKASDADVGENAEIEYSITDGEGHEMFDVITDQETQEGIITVKKLLDFEKKKVYTLKVEASNPHVEPRFLYLGPFKDSATVRIVVDDVDEPPVFSKLAYILQIREDARINTTIGSVAAQDPDAARNPVKYSVDRHTDMDRIFNIDSGNGSIFTSKLLDRETLLWHNITVIATEINNPKQSSRVPLYIKVLDVNDNAPEFAEFYETFVCEKAKADQLIQTLRAVDKDDPYSGHQFSFSLAPEAASSSNFTIQDNKDNTAGILTRKNGYNRHEMSTYLLPVVISDNDYPVQSSTGTVTVRVCACDHHGNMQSCHAEALIHPTGLSTGALVAILLCIVILLVTVVLFAALRRQRKKEPLIISKEDIRDNIVSYNDEGGGEEDTQAFDIGTLRNPEAMEDSKSRRDIVPEALFLPRRTPTARDNTDVRDFINQRLKENDTDPTAPPYDSLATYAYEGTGSVADSLSSLESVTTDGDQDYDYLSDWGPRFKKLADMYGGMDSDKDS.

The N-terminal stretch at 1–18 is a signal peptide; that stretch reads MRTYRYFLLLFWVGQPYP. Positions 19 to 53 are excised as a propeptide; the sequence is TFSNPLSKRTSGFPAKRKALELSANSRNELSRSKR. Cadherin domains are found at residues 54–159, 160–268, 269–383, 384–486, and 487–608; these read SWMW…EPIF, TKDV…PPRF, PQST…PPVF, SKLA…DNAP, and EFAE…LIHP. At 54 to 615 the chain is on the extracellular side; sequence SWMWNQFFLL…IHPTGLSTGA (562 aa). N-linked (GlcNAc...) asparagine glycosylation occurs at Asn-255. A disordered region spans residues 260–291; the sequence is DVNDNPPRFPQSTYQFKTPESSPPGTPIGRIK. The span at 269–279 shows a compositional bias: polar residues; it reads PQSTYQFKTPE. N-linked (GlcNAc...) asparagine glycosylation is found at Asn-399, Asn-437, Asn-455, and Asn-536. A helical membrane pass occupies residues 616 to 636; that stretch reads LVAILLCIVILLVTVVLFAAL. Residues 637–790 lie on the Cytoplasmic side of the membrane; that stretch reads RRQRKKEPLI…YGGMDSDKDS (154 aa). Phosphoserine is present on residues Ser-786 and Ser-790.

It localises to the cell membrane. Cadherins are calcium-dependent cell adhesion proteins. They preferentially interact with themselves in a homophilic manner in connecting cells; cadherins may thus contribute to the sorting of heterogeneous cell types. The protein is Cadherin-6 (Cdh6) of Mus musculus (Mouse).